The primary structure comprises 306 residues: Acetyl-coenzyme A carboxylase carboxyl transferase subunit beta (306 aa).

Residues 25–294 (LWIKDPTSGE…APEPSHAFSK (270 aa)) enclose the CoA carboxyltransferase N-terminal domain. Residues 287-306 (EPSHAFSKDSQTQISKTKAA) are disordered. Residues 294–306 (KDSQTQISKTKAA) are compositionally biased toward polar residues.

This sequence belongs to the AccD/PCCB family. As to quaternary structure, acetyl-CoA carboxylase is a heterohexamer composed of biotin carboxyl carrier protein (AccB), biotin carboxylase (AccC) and two subunits each of ACCase subunit alpha (AccA) and ACCase subunit beta (AccD).

It localises to the cytoplasm. The enzyme catalyses N(6)-carboxybiotinyl-L-lysyl-[protein] + acetyl-CoA = N(6)-biotinyl-L-lysyl-[protein] + malonyl-CoA. The protein operates within lipid metabolism; malonyl-CoA biosynthesis; malonyl-CoA from acetyl-CoA: step 1/1. Component of the acetyl coenzyme A carboxylase (ACC) complex. Biotin carboxylase (BC) catalyzes the carboxylation of biotin on its carrier protein (BCCP) and then the CO(2) group is transferred by the transcarboxylase to acetyl-CoA to form malonyl-CoA. The sequence is that of Acetyl-coenzyme A carboxylase carboxyl transferase subunit beta from Bartonella bacilliformis (strain ATCC 35685 / KC583 / Herrer 020/F12,63).